Here is a 122-residue protein sequence, read N- to C-terminus: uncharacterized protein (122 aa).

A run of 2 helical transmembrane segments spans residues 34–54 (IIFL…GVLV) and 91–111 (FVLA…FVSF).

Its subcellular location is the cell membrane. This is an uncharacterized protein from Mycoplasma pneumoniae (strain ATCC 29342 / M129 / Subtype 1) (Mycoplasmoides pneumoniae).